A 235-amino-acid chain; its full sequence is Large ribosomal subunit protein uL1 (235 aa).

Residues 1–22 (MSKNSKAYRAAAEKVDRSNPYT) form a disordered region.

This sequence belongs to the universal ribosomal protein uL1 family. As to quaternary structure, part of the 50S ribosomal subunit.

Functionally, binds directly to 23S rRNA. The L1 stalk is quite mobile in the ribosome, and is involved in E site tRNA release. In terms of biological role, protein L1 is also a translational repressor protein, it controls the translation of the L11 operon by binding to its mRNA. This Mycobacterium ulcerans (strain Agy99) protein is Large ribosomal subunit protein uL1.